A 447-amino-acid polypeptide reads, in one-letter code: Serine/threonine-protein phosphatase 2A 55 kDa regulatory subunit B alpha isoform (447 aa).

Ala-2 bears the N-acetylalanine mark. WD repeat units follow at residues 11–80 (QWCF…FQSH), 94–174 (EKIN…IFAN), 175–218 (AHTY…VDIK), 227–270 (EVIT…KLFE), 288–325 (ISDVKFSHSGRYMMTRDYLSVKVWDLNMENRPVETYQV), 347–381 (ECCWNGSDSVVMTGSYNNFFRMFDRNTKRDITLEA), and 414–446 (DFNKKILHTAWHPKENIIAVATTNNLYIFQDKV).

The protein belongs to the phosphatase 2A regulatory subunit B family. As to quaternary structure, PP2A consists of a common heterodimeric core enzyme, composed of a 36 kDa catalytic subunit (subunit C) and a 65 kDa constant regulatory subunit (PR65 or subunit A), that associates with a variety of regulatory subunits. Proteins that associate with the core dimer include three families of regulatory subunits B (the R2/B/PR55/B55, R3/B''/PR72/PR130/PR59 and R5/B'/B56 families), the 48 kDa variable regulatory subunit, viral proteins, and cell signaling molecules. Interacts with the PP2A C catalytic subunit PPP2CA. Interacts with the PP2A A subunit PPP2R1A. Found in a complex with at least ARL2, PPP2CB, PPP2R1A, PPP2R2A, PPP2R5E and TBCD. Interacts with MFHAS1; the interaction is direct. Interacts with PABIR1/FAM122A (via its N-terminus); the interaction is direct and inhibits PP2A activity. Interacts with ARPP19; the interaction is direct and inhibits PP2A activity. Interacts with CRTC3. As to expression, brain.

Its function is as follows. Substrate-recognition subunit of protein phosphatase 2A (PP2A) that plays a key role in cell cycle by controlling mitosis entry and exit. Involved in chromosome clustering during late mitosis by mediating dephosphorylation of MKI67. Essential for serine/threonine-protein phosphatase 2A-mediated dephosphorylation of WEE1, preventing its ubiquitin-mediated proteolysis, increasing WEE1 protein levels, and promoting the G2/M checkpoint. The protein is Serine/threonine-protein phosphatase 2A 55 kDa regulatory subunit B alpha isoform (Ppp2r2a) of Rattus norvegicus (Rat).